Consider the following 364-residue polypeptide: Aminomethyltransferase (364 aa).

This sequence belongs to the GcvT family. The glycine cleavage system is composed of four proteins: P, T, L and H.

The catalysed reaction is N(6)-[(R)-S(8)-aminomethyldihydrolipoyl]-L-lysyl-[protein] + (6S)-5,6,7,8-tetrahydrofolate = N(6)-[(R)-dihydrolipoyl]-L-lysyl-[protein] + (6R)-5,10-methylene-5,6,7,8-tetrahydrofolate + NH4(+). The glycine cleavage system catalyzes the degradation of glycine. The sequence is that of Aminomethyltransferase from Shigella boydii serotype 18 (strain CDC 3083-94 / BS512).